The sequence spans 344 residues: tRNA N6-adenosine threonylcarbamoyltransferase (344 aa).

His112 and His116 together coordinate Fe cation. Substrate is bound by residues 134 to 138 (LASGG), Asp167, Gly180, and Asn280. Asp308 is a binding site for Fe cation.

This sequence belongs to the KAE1 / TsaD family. The cofactor is Fe(2+).

The protein resides in the cytoplasm. It catalyses the reaction L-threonylcarbamoyladenylate + adenosine(37) in tRNA = N(6)-L-threonylcarbamoyladenosine(37) in tRNA + AMP + H(+). Required for the formation of a threonylcarbamoyl group on adenosine at position 37 (t(6)A37) in tRNAs that read codons beginning with adenine. Is involved in the transfer of the threonylcarbamoyl moiety of threonylcarbamoyl-AMP (TC-AMP) to the N6 group of A37, together with TsaE and TsaB. TsaD likely plays a direct catalytic role in this reaction. The chain is tRNA N6-adenosine threonylcarbamoyltransferase from Rickettsia conorii (strain ATCC VR-613 / Malish 7).